Consider the following 203-residue polypeptide: Ribonuclease T (203 aa).

Residues 11–185 form the Exonuclease domain; the sequence is VVVDVETGGF…YDTEKTAELF (175 aa). Residues aspartate 14, glutamate 16, histidine 172, and aspartate 177 each coordinate Mg(2+). Histidine 172 functions as the Proton donor/acceptor in the catalytic mechanism.

Belongs to the RNase T family. In terms of assembly, homodimer. It depends on Mg(2+) as a cofactor.

Its function is as follows. Trims short 3' overhangs of a variety of RNA species, leaving a one or two nucleotide 3' overhang. Responsible for the end-turnover of tRNA: specifically removes the terminal AMP residue from uncharged tRNA (tRNA-C-C-A). Also appears to be involved in tRNA biosynthesis. The protein is Ribonuclease T of Pseudomonas putida (strain ATCC 47054 / DSM 6125 / CFBP 8728 / NCIMB 11950 / KT2440).